We begin with the raw amino-acid sequence, 352 residues long: Chorismate synthase (352 aa).

R48 provides a ligand contact to NADP(+). FMN contacts are provided by residues 125–127, 238–239, G278, 293–297, and R319; these read RSS, NA, and KPTSS.

This sequence belongs to the chorismate synthase family. As to quaternary structure, homotetramer. FMNH2 is required as a cofactor.

The enzyme catalyses 5-O-(1-carboxyvinyl)-3-phosphoshikimate = chorismate + phosphate. The protein operates within metabolic intermediate biosynthesis; chorismate biosynthesis; chorismate from D-erythrose 4-phosphate and phosphoenolpyruvate: step 7/7. In terms of biological role, catalyzes the anti-1,4-elimination of the C-3 phosphate and the C-6 proR hydrogen from 5-enolpyruvylshikimate-3-phosphate (EPSP) to yield chorismate, which is the branch point compound that serves as the starting substrate for the three terminal pathways of aromatic amino acid biosynthesis. This reaction introduces a second double bond into the aromatic ring system. The sequence is that of Chorismate synthase from Legionella pneumophila (strain Lens).